The sequence spans 269 residues: DNA-binding protein RFXANK (269 aa).

Residues 1–36 (MEPTQVAENLVPNQQPPVPDLEDPEDTRDESPENSD) are disordered. ANK repeat units follow at residues 88 to 127 (LDSLSIHQLAAQGELSQLKDHLRKGACPACTCLSGNNLIN), 132 to 161 (RGFTPLIWASAFGEIETVRFLLDWGADPHI), 165 to 194 (ERESALSLASMGGYTDIVRLLLDRDVDINI), 198 to 227 (NGGTPLLYAVRGNHVKCVEALLARGADLTT), and 231 to 260 (SGYTPMDLAVALGYRKVQQVMESHILRLFQ).

In terms of assembly, forms homodimers. The RFX heterotetrameric complex consists of 2 molecules of RFX5 and one each of RFXAP and RFX-B/RFXANK; with each subunit representing a separate complementation group. Interacts (via ankyrin repeats) with RFX5 (via PxLPxI/L motif); the interaction is direct. RFX forms cooperative DNA binding complexes with X2BP and CBF/NF-Y. RFX associates with CIITA to form an active transcriptional complex. Interacts with RAF1. Interacts with RFX7. In terms of processing, phosphorylated by RAF1. Expressed primarily in thymus, lung and testis.

It localises to the cytoplasm. The protein resides in the nucleus. In terms of biological role, activates transcription from class II MHC promoters. Activation requires the activity of the MHC class II transactivator/CIITA. May regulate other genes in the cell. RFX binds the X1 box of MHC-II promoters. May also potentiate the activation of RAF1. This Mus musculus (Mouse) protein is DNA-binding protein RFXANK (Rfxank).